Here is an 837-residue protein sequence, read N- to C-terminus: Ribosome-releasing factor 2, mitochondrial (837 aa).

Residues 1-29 (MFSINARTKVPIWVPFIARKGFSMSTRQL) constitute a mitochondrion transit peptide. Residues 40–331 (LNTRNIGIIA…GVVDYLPSPL (292 aa)) enclose the tr-type G domain. Residues 49 to 56 (AHIDAGKT), 113 to 117 (DTPGH), and 167 to 170 (NKMD) contribute to the GTP site. Positions 338–359 (ITASTSKVSKKQKQKKNSKVSS) are disordered. A compositionally biased stretch (basic residues) spans 345-355 (VSKKQKQKKNS).

The protein belongs to the TRAFAC class translation factor GTPase superfamily. Classic translation factor GTPase family. EF-G/EF-2 subfamily.

The protein resides in the mitochondrion. Functionally, mitochondrial GTPase that mediates the disassembly of ribosomes from messenger RNA at the termination of mitochondrial protein biosynthesis. Not involved in the GTP-dependent ribosomal translocation step during translation elongation. This is Ribosome-releasing factor 2, mitochondrial from Meyerozyma guilliermondii (strain ATCC 6260 / CBS 566 / DSM 6381 / JCM 1539 / NBRC 10279 / NRRL Y-324) (Yeast).